Consider the following 311-residue polypeptide: MAIKKITIVGAGRVGEATAQFLVKNELCRELVLLDAQEGVAQGAALDIQQSAPLFDFDARVTGSTNYELIADSDLVVITAGKPRKPGMSRSDVLDSNLPIITDIMNNVMRFAPQSLVMIVTNPVDVLTYHAWRHCGWDRARVFGQAGVLDSARMASFIAGETGLSVKDISAMVLGGHGDTMLPLIRYTTISGIPLTHFLDQQVIEKIIERTRHGGFEILRLRQTSSAYDAPAAAIAGMVDAIRHNRKRILPCVAILQGEYGENEVAMGVPSVLGGDGLERIVELPLTEEEQEQFKHSVEAIRTDLAHLARA.

NAD(+)-binding positions include 10–15 (GAGRVG) and aspartate 35. Substrate is bound by residues arginine 84 and arginine 90. NAD(+)-binding positions include asparagine 97 and 120–122 (VTN). The substrate site is built by asparagine 122 and arginine 153. Histidine 177 (proton acceptor) is an active-site residue.

It belongs to the LDH/MDH superfamily. MDH type 3 family.

The enzyme catalyses (S)-malate + NAD(+) = oxaloacetate + NADH + H(+). Catalyzes the reversible oxidation of malate to oxaloacetate. This Nitrosococcus oceani (strain ATCC 19707 / BCRC 17464 / JCM 30415 / NCIMB 11848 / C-107) protein is Malate dehydrogenase.